The primary structure comprises 578 residues: Serine/threonine-protein kinase D6PKL3 (578 aa).

Positions 1-24 are enriched in low complexity; that stretch reads MDSSSSVVYVGSSSKSRNFQSKSK. The tract at residues 1–64 is disordered; the sequence is MDSSSSVVYV…EVIESSVSSV (64 aa). Over residues 25–34 the composition is skewed to polar residues; it reads GSITSFSIDS. Low complexity predominate over residues 53-64; the sequence is SPEVIESSVSSV. The Protein kinase domain occupies 182–516; it reads FKLIKKLGGG…ATEIKQHPFF (335 aa). ATP is bound by residues 188-196 and Lys-211; that span reads LGGGDIGNV. Residue Asp-307 is the Proton acceptor of the active site. Residues 325–426 are activation loop; that stretch reads DFDLSLRCAV…VGTHEYLAPE (102 aa). Positions 575-578 match the PIF motif; that stretch reads IDFF.

Belongs to the protein kinase superfamily. AGC Ser/Thr protein kinase family. In terms of tissue distribution, expressed predominantly in root tissue with lower levels found in leaf, stem, seed and flower.

It localises to the cell membrane. It carries out the reaction L-seryl-[protein] + ATP = O-phospho-L-seryl-[protein] + ADP + H(+). The catalysed reaction is L-threonyl-[protein] + ATP = O-phospho-L-threonyl-[protein] + ADP + H(+). Functionally, protein kinase that regulates the auxin transport activity of PIN auxin efflux facilitators by direct phosphorylation. D6PK-mediated PIN phosphorylation promotes auxin transport in the hypocotyl and this is a prerequisite for PHOT1-dependent hypocotyl bending. This chain is Serine/threonine-protein kinase D6PKL3 (D6PKL3), found in Arabidopsis thaliana (Mouse-ear cress).